A 159-amino-acid polypeptide reads, in one-letter code: 6,7-dimethyl-8-ribityllumazine synthase (159 aa).

5-amino-6-(D-ribitylamino)uracil is bound by residues Phe-22, 56–58 (AFE), and 80–82 (AVI). 85–86 (AT) contacts (2S)-2-hydroxy-3-oxobutyl phosphate. His-88 serves as the catalytic Proton donor. Phe-113 lines the 5-amino-6-(D-ribitylamino)uracil pocket. Arg-127 provides a ligand contact to (2S)-2-hydroxy-3-oxobutyl phosphate.

Belongs to the DMRL synthase family.

The catalysed reaction is (2S)-2-hydroxy-3-oxobutyl phosphate + 5-amino-6-(D-ribitylamino)uracil = 6,7-dimethyl-8-(1-D-ribityl)lumazine + phosphate + 2 H2O + H(+). It participates in cofactor biosynthesis; riboflavin biosynthesis; riboflavin from 2-hydroxy-3-oxobutyl phosphate and 5-amino-6-(D-ribitylamino)uracil: step 1/2. Catalyzes the formation of 6,7-dimethyl-8-ribityllumazine by condensation of 5-amino-6-(D-ribitylamino)uracil with 3,4-dihydroxy-2-butanone 4-phosphate. This is the penultimate step in the biosynthesis of riboflavin. The protein is 6,7-dimethyl-8-ribityllumazine synthase of Lactiplantibacillus plantarum (strain ATCC BAA-793 / NCIMB 8826 / WCFS1) (Lactobacillus plantarum).